A 911-amino-acid polypeptide reads, in one-letter code: MCSHFTQDFLPVQGIEDSFHKLILRRYEKCGHDNLQLRKGCKSMNVCKVQKGVYNGINKCLSNTQSKIFQCNARVKVFSKFANSNKDKTRHTGEKHFKCNECGKSFQKFSDLTQHKGIHAGEKPYTCEERGKDFGWYTDLNQHKKIHTGEKPYKCEECGKAFNRSTNLTAHKRIHNREKAYTGEDRDRAFGWSTNLNEYKKIHTGDKPYKCKECGKAFMHSSHLNKHEKIHTGEKPYKCKECGKVISSSSSFAKHKRIHTGEKPFKCLECGKAFNISTTLTKHRRIHTGEKPYTCEVCGKAFRQSANLYVHRRIHTGEKPYTCGECGKTFRQSANLYVHRRIHTGEKPYKCEDCGKAFGRYTALNQHKKIHTGEKPYKCEECGKAFNSSTNLTAHKRIHTREKPYTCEDRGRAFGLSTNLNEYKKIHTGDKPYKCKECGKAFIHSLHLNKHEKIHTGKKPYKCKQCGKVITSSSSFAKHKRIHTGEKPFECLECGKAFTSSTTLTKHRRIHTGEKPYTCEVCGKAFRQSAILYVHRRIHTGEKPYTCEECGKTFRQSANLYVHRRIHTGEKPYKCEECGKAFGRYTDLNQHKKIHTGEKLYKCEECGKDFVWYTDLNQQKKIYTGEKPYKCEECGKAFAPSTDLNQHTKILTGEQSYKCEECGKAFGWSIALNQHKKIHTGEKPYKCEECGKAFSRSRNLTTHRRVHTREKPYKCEDRGRSFGWSTNLNEYKKIHTGDKLYKCKECGKVFKQSSHLNRHEKIHTGKKPYKCKECGKVITSSSSFAKHKRIHTGEKPFKCLECGKAFTSSTTLTKHRRIHTGEKPYTCEECGKAFRQSAILYVHRRIHTGEKPYTCGECGKTFRQSANLYAHKKIHTGEKPYTCGDCGKTFRQSANLYAHKKIHTGDKTIQV.

The C2H2-type 1; degenerate zinc finger occupies 69 to 91 (FQCNARVKVFSKFANSNKDKTRH). The segment at 97–119 (FKCNECGKSFQKFSDLTQHKGIH) adopts a C2H2-type 2 zinc-finger fold. The C2H2-type 3; degenerate zinc finger occupies 125–147 (YTCEERGKDFGWYTDLNQHKKIH). Residues 153-175 (YKCEECGKAFNRSTNLTAHKRIH) form a C2H2-type 4 zinc finger. The segment at 181 to 203 (YTGEDRDRAFGWSTNLNEYKKIH) adopts a C2H2-type 5; degenerate zinc-finger fold. 7 consecutive C2H2-type zinc fingers follow at residues 209–231 (YKCK…EKIH), 237–259 (YKCK…KRIH), 265–287 (FKCL…RRIH), 293–315 (YTCE…RRIH), 321–343 (YTCG…RRIH), 349–371 (YKCE…KKIH), and 377–399 (YKCE…KRIH). Residues 405-427 (YTCEDRGRAFGLSTNLNEYKKIH) form a C2H2-type 13; degenerate zinc finger. 6 consecutive C2H2-type zinc fingers follow at residues 433–455 (YKCK…EKIH), 461–483 (YKCK…KRIH), 489–511 (FECL…RRIH), 517–539 (YTCE…RRIH), 545–567 (YTCE…RRIH), and 573–595 (YKCE…KKIH). Lysine 478 is covalently cross-linked (Glycyl lysine isopeptide (Lys-Gly) (interchain with G-Cter in SUMO2)). The segment at 601–623 (YKCEECGKDFVWYTDLNQQKKIY) adopts a C2H2-type 20; degenerate zinc-finger fold. The segment at 629 to 651 (YKCEECGKAFAPSTDLNQHTKIL) adopts a C2H2-type 21; degenerate zinc-finger fold. Lysine 649 participates in a covalent cross-link: Glycyl lysine isopeptide (Lys-Gly) (interchain with G-Cter in SUMO2). 2 C2H2-type zinc fingers span residues 657–679 (YKCE…KKIH) and 685–707 (YKCE…RRVH). A C2H2-type 24; degenerate zinc finger spans residues 713–735 (YKCEDRGRSFGWSTNLNEYKKIH). 6 consecutive C2H2-type zinc fingers follow at residues 741–763 (YKCK…EKIH), 769–791 (YKCK…KRIH), 797–819 (FKCL…RRIH), 825–847 (YTCE…RRIH), 853–875 (YTCG…KKIH), and 881–903 (YTCG…KKIH). Lysine 786 is covalently cross-linked (Glycyl lysine isopeptide (Lys-Gly) (interchain with G-Cter in SUMO2)).

Belongs to the krueppel C2H2-type zinc-finger protein family.

It is found in the nucleus. Functionally, may be involved in transcriptional regulation. This chain is Zinc finger protein 721 (ZNF721), found in Homo sapiens (Human).